Consider the following 229-residue polypeptide: Large ribosomal subunit protein uL1 (229 aa).

It belongs to the universal ribosomal protein uL1 family. Part of the 50S ribosomal subunit.

Its function is as follows. Binds directly to 23S rRNA. The L1 stalk is quite mobile in the ribosome, and is involved in E site tRNA release. Functionally, protein L1 is also a translational repressor protein, it controls the translation of the L11 operon by binding to its mRNA. This is Large ribosomal subunit protein uL1 from Streptococcus agalactiae serotype Ia (strain ATCC 27591 / A909 / CDC SS700).